Consider the following 339-residue polypeptide: Replication factor C subunit 4 (339 aa).

Position 49–56 (49–56) interacts with ATP; the sequence is GPPGTGKT.

Belongs to the activator 1 small subunits family. In terms of assembly, heterotetramer of subunits RFC2, RFC3, RFC4 and RFC5 that can form a complex with RFC1.

The protein localises to the nucleus. In terms of biological role, may be involved in DNA replication and thus regulate cell proliferation. This chain is Replication factor C subunit 4 (RFC4), found in Arabidopsis thaliana (Mouse-ear cress).